A 682-amino-acid chain; its full sequence is Protein ACTIVITY OF BC1 COMPLEX KINASE 1, chloroplastic (682 aa).

A chloroplast-targeting transit peptide spans 1–79; the sequence is MESIHCNSLL…NSTDASVMTT (79 aa). In terms of domain architecture, Protein kinase spans 236 to 567; sequence KISSQTIAAA…IQVLFKDGVF (332 aa). ATP is bound by residues 242–250 and K265; that span reads IAAASLGQV. The Proton acceptor role is filled by D400.

This sequence belongs to the protein kinase superfamily. ADCK protein kinase family. Interacts with ABC1K3 in plastoglobules (PG). Expressed in all tissues (e.g. especially in leaves) at all developmental stages from seed germination to flowering, except in the root tips.

Its subcellular location is the plastid. It is found in the chloroplast. It localises to the plastoglobule. The catalysed reaction is L-seryl-[protein] + ATP = O-phospho-L-seryl-[protein] + ADP + H(+). It carries out the reaction L-threonyl-[protein] + ATP = O-phospho-L-threonyl-[protein] + ADP + H(+). Kinase that can phosphorylate the tocopherol cyclase VTE1, a key enzyme of tocopherol (vitamin E) metabolism and involved in the recycling of oxidated alpha-tocopherol quinone, possibly stabilizing it at plastoglobules. Also regulates plastoglobule protein composition. Prevents photodamage of chloroplasts under continuous red light, thus working in opposition to ABC1K3. Together with ABC1K1, contributes to plastoglobule (PG) function in prenyl-lipid metabolism, stress response, and thylakoid remodeling. Involved in chlorophyll degradation and in the maintenance of the number of chlorophyll-binding photosynthetic thylakoid membranes. Ensures photosynthetic electron transport by regulating the homeostasis of plastoquinone, beta-carotene and xanthophyll lutein, as well as membrane antioxidant tocopherol metabolism. Seems to affect specifically stability or turnover of D1 protein, product of psbA, one of the four core subunits of the photosystem II (PSII). Required for photooxidative stress responses, including the induction of oxidative stress response genes (e.g. FSD1, CSD1, CAT1, and UTG71C1), to prevent photosystem II core and chlorophyll degradations. The polypeptide is Protein ACTIVITY OF BC1 COMPLEX KINASE 1, chloroplastic (Arabidopsis thaliana (Mouse-ear cress)).